A 199-amino-acid chain; its full sequence is MIQISDTAQTHFRKLIEREGVPGMGVRLSAVDPGTPRADARLEFAEPTDLLGDEWAVDCDGFTLYVDAGSVGWLDGAEIDIVAGSAGTQQLTIKAPRIKGEAPGDAASLVERVHWVVENEINPQLASHGGKVAVQEVSAEGVVLLRFGGGCQGCGMADVTLKQGIEKTLMGRVPGVTAVRDATDHDSGHAPYIPRGNAA.

Residues cysteine 151 and cysteine 154 each coordinate [4Fe-4S] cluster.

It belongs to the NfuA family. In terms of assembly, homodimer. The cofactor is [4Fe-4S] cluster.

Its function is as follows. Involved in iron-sulfur cluster biogenesis. Binds a 4Fe-4S cluster, can transfer this cluster to apoproteins, and thereby intervenes in the maturation of Fe/S proteins. Could also act as a scaffold/chaperone for damaged Fe/S proteins. The sequence is that of Fe/S biogenesis protein NfuA from Stenotrophomonas maltophilia (strain K279a).